The sequence spans 266 residues: ATP synthase subunit a (266 aa).

6 consecutive transmembrane segments (helical) span residues 38 to 58, 99 to 119, 126 to 146, 162 to 182, 191 to 211, and 224 to 244; these read KQML…VLAA, LLFS…IPLI, HVGG…AIGI, GVPW…NFVV, LFAT…GIEY, and SVLV…IMVL.

It belongs to the ATPase A chain family. In terms of assembly, F-type ATPases have 2 components, CF(1) - the catalytic core - and CF(0) - the membrane proton channel. CF(1) has five subunits: alpha(3), beta(3), gamma(1), delta(1), epsilon(1). CF(0) has three main subunits: a(1), b(2) and c(9-12). The alpha and beta chains form an alternating ring which encloses part of the gamma chain. CF(1) is attached to CF(0) by a central stalk formed by the gamma and epsilon chains, while a peripheral stalk is formed by the delta and b chains.

It is found in the cell membrane. In terms of biological role, key component of the proton channel; it plays a direct role in the translocation of protons across the membrane. The chain is ATP synthase subunit a from Pseudarthrobacter chlorophenolicus (strain ATCC 700700 / DSM 12829 / CIP 107037 / JCM 12360 / KCTC 9906 / NCIMB 13794 / A6) (Arthrobacter chlorophenolicus).